Reading from the N-terminus, the 513-residue chain is GMP synthase [glutamine-hydrolyzing] (513 aa).

Positions 3–200 (SVTVLDFGSQ…LIDIAGIKPD (198 aa)) constitute a Glutamine amidotransferase type-1 domain. The active-site Nucleophile is the Cys-80. Residues His-174 and Glu-176 contribute to the active site. Positions 201–388 (WSPKSFIGHQ…LGIAEDILMR (188 aa)) constitute a GMPS ATP-PPase domain. 228 to 234 (SGGVDST) lines the ATP pocket.

In terms of assembly, homodimer.

It carries out the reaction XMP + L-glutamine + ATP + H2O = GMP + L-glutamate + AMP + diphosphate + 2 H(+). The protein operates within purine metabolism; GMP biosynthesis; GMP from XMP (L-Gln route): step 1/1. Its function is as follows. Catalyzes the synthesis of GMP from XMP. The chain is GMP synthase [glutamine-hydrolyzing] from Chlorobium phaeobacteroides (strain DSM 266 / SMG 266 / 2430).